A 451-amino-acid polypeptide reads, in one-letter code: Tubulin alpha-2 chain (451 aa).

GTP is bound at residue Gln11. Lys40 bears the N6-acetyllysine mark. Glu71, Gly144, Thr145, Thr179, Asn206, and Asn228 together coordinate GTP. Residue Glu71 participates in Mg(2+) binding. The active site involves Glu254.

The protein belongs to the tubulin family. Dimer of alpha and beta chains. A typical microtubule is a hollow water-filled tube with an outer diameter of 25 nm and an inner diameter of 15 nM. Alpha-beta heterodimers associate head-to-tail to form protofilaments running lengthwise along the microtubule wall with the beta-tubulin subunit facing the microtubule plus end conferring a structural polarity. Microtubules usually have 13 protofilaments but different protofilament numbers can be found in some organisms and specialized cells. Requires Mg(2+) as cofactor. Post-translationally, undergoes a tyrosination/detyrosination cycle, the cyclic removal and re-addition of a C-terminal tyrosine residue by the enzymes tubulin tyrosine carboxypeptidase (TTCP) and tubulin tyrosine ligase (TTL), respectively. In terms of processing, acetylation of alpha chains at Lys-40 stabilizes microtubules and affects affinity and processivity of microtubule motors. This modification has a role in multiple cellular functions, ranging from cell motility, cell cycle progression or cell differentiation to intracellular trafficking and signaling.

It is found in the cytoplasm. The protein localises to the cytoskeleton. It carries out the reaction GTP + H2O = GDP + phosphate + H(+). Tubulin is the major constituent of microtubules, a cylinder consisting of laterally associated linear protofilaments composed of alpha- and beta-tubulin heterodimers. Microtubules grow by the addition of GTP-tubulin dimers to the microtubule end, where a stabilizing cap forms. Below the cap, tubulin dimers are in GDP-bound state, owing to GTPase activity of alpha-tubulin. The protein is Tubulin alpha-2 chain (TUBA2) of Zea mays (Maize).